A 426-amino-acid polypeptide reads, in one-letter code: Cytochrome c biogenesis protein CcsB (426 aa).

Transmembrane regions (helical) follow at residues 14-34, 72-92, and 162-182; these read LKIAILLLLVIAVSCAAGTLI, SFWFLFLLIWLGLALSVCSFR, and LGPILIHLGMILLMIGATYGS.

The protein belongs to the Ccs1/CcsB family. In terms of assembly, may interact with CcsA.

The protein localises to the cellular thylakoid membrane. Required during biogenesis of c-type cytochromes (cytochrome c6 and cytochrome f) at the step of heme attachment. The protein is Cytochrome c biogenesis protein CcsB of Prochlorococcus marinus (strain NATL2A).